The sequence spans 148 residues: Cathelicidin-1 (148 aa).

A signal peptide spans 1 to 17 (MLSCWVLLLALLGGACA). Residues 18–122 (LPAPLGYSQA…TCVDSMADPV (105 aa)) constitute a propeptide that is removed on maturation. Cystine bridges form between Cys75–Cys86 and Cys97–Cys114.

This sequence belongs to the cathelicidin family. In terms of tissue distribution, detected in gizzard, liver, small intestine, large intestine, cloaca, bursa of Fabricius, gall bladder, lung, trachea, kidney, testis and bone marrow.

The protein localises to the secreted. Binds bacterial lipopolysaccharide (LPS). Has potent antimicrobial activity against Gram-positive and Gram-negative bacteria (in vitro). Has hemolytic activity (in vitro). May play a role in the innate immune response. This is Cathelicidin-1 (CATHL1) from Gallus gallus (Chicken).